Reading from the N-terminus, the 709-residue chain is Putative extracellular sulfatase Sulf-1 homolog (709 aa).

Positions 1–27 (MISNLRISNYFIIFYVLFLIIPIKVTS) are cleaved as a signal peptide. Ca(2+) is bound by residues Asp43, Asp44, and Cys79. Residue Cys79 is the Nucleophile of the active site. Cys79 carries the post-translational modification 3-oxoalanine (Cys). Asn103, Asn162, and Asn189 each carry an N-linked (GlcNAc...) asparagine glycan. Positions 308 and 309 each coordinate Ca(2+). N-linked (GlcNAc...) asparagine glycosylation is found at Asn344, Asn468, Asn500, Asn540, Asn566, Asn610, and Asn620.

The protein belongs to the sulfatase family. Ca(2+) is required as a cofactor. The conversion to 3-oxoalanine (also known as C-formylglycine, FGly), of a serine or cysteine residue in prokaryotes and of a cysteine residue in eukaryotes, is critical for catalytic activity.

It localises to the endoplasmic reticulum. The protein resides in the golgi apparatus. The protein localises to the golgi stack. Its subcellular location is the cell surface. The chain is Putative extracellular sulfatase Sulf-1 homolog (sul-1) from Caenorhabditis elegans.